The following is a 236-amino-acid chain: B-cell antigen receptor complex-associated protein alpha chain (236 aa).

The first 32 residues, M1 to A32, serve as a signal peptide directing secretion. The Ig-like C2-type domain occupies L33–S122. The Extracellular segment spans residues L33–N151. C54 and C109 form a disulfide bridge. N-linked (GlcNAc...) asparagine glycans are attached at residues N66 and N76. The helical transmembrane segment at I152–L172 threads the bilayer. Topologically, residues F173 to P236 are cytoplasmic. Positions D185–G213 constitute an ITAM domain. The residue at position 196 (Y196) is a Phosphotyrosine; by SRC-type Tyr-kinases. A Phosphotyrosine modification is found at Y207. R212 is subject to Asymmetric dimethylarginine; by PRMT1. Position 218 is a phosphotyrosine; by Tyr-kinases (Y218).

In terms of assembly, heterodimer of alpha and beta chains; disulfide-linked. Part of the B-cell antigen receptor complex where the alpha/beta chain heterodimer is non-covalently associated with an antigen-specific membrane-bound surface immunoglobulin of two heavy chains and two light chains. Interacts through its phosphorylated ITAM domain with the SH2 domains of SYK which stimulates SYK autophosphorylation and activation. Also interacts, when phosphorylated on Tyr-207, with the SH2 domain of BLNK/SLP65, bringing BLNK into proximity with SYK and allowing SYK to phosphorylate BLNK which is necessary for trafficking of the BCR to late endosomes. Interacts with Src-family tyrosine kinases including FYN and LYN, increasing their activity. In terms of processing, phosphorylated on tyrosine, serine and threonine residues upon B-cell activation. Phosphorylation of tyrosine residues by Src-family kinases, including LYN, is an early and essential feature of the BCR signaling cascade. The phosphorylated tyrosines serve as docking sites for SH2-domain containing kinases, leading to their activation which in turn leads to phosphorylation of downstream targets. Phosphorylation of serine and threonine residues may prevent subsequent tyrosine phosphorylation. Post-translationally, arginine methylation in the ITAM domain may interfere with the binding of SYK. It promotes signals leading to B-cell differentiation.

The protein localises to the cell membrane. In terms of biological role, required in cooperation with CD79B for initiation of the signal transduction cascade activated by binding of antigen to the B-cell antigen receptor complex (BCR) which leads to internalization of the complex, trafficking to late endosomes and antigen presentation. Also required for BCR surface expression and for efficient differentiation of pro- and pre-B-cells. Stimulates SYK autophosphorylation and activation. Binds to BLNK, bringing BLNK into proximity with SYK and allowing SYK to phosphorylate BLNK. Also interacts with and increases activity of some Src-family tyrosine kinases. Represses BCR signaling during development of immature B-cells. The chain is B-cell antigen receptor complex-associated protein alpha chain (CD79A) from Canis lupus familiaris (Dog).